Reading from the N-terminus, the 388-residue chain is Mannitol-1-phosphate 5-dehydrogenase (388 aa).

5–16 contacts NAD(+); sequence AIQFGGGNIGRG. The active site involves Lys-213.

It belongs to the mannitol dehydrogenase family. Monomer.

It carries out the reaction D-mannitol 1-phosphate + NAD(+) = beta-D-fructose 6-phosphate + NADH + H(+). Catalyzes the NAD(H)-dependent interconversion of D-fructose 6-phosphate and D-mannitol 1-phosphate in the mannitol metabolic pathway. This is Mannitol-1-phosphate 5-dehydrogenase (mpdA) from Neosartorya fischeri (strain ATCC 1020 / DSM 3700 / CBS 544.65 / FGSC A1164 / JCM 1740 / NRRL 181 / WB 181) (Aspergillus fischerianus).